The following is a 269-amino-acid chain: C-type lectin domain family 1 member A (269 aa).

Residues 1 to 51 (MQAKYSSTRDMLDDDDTTISLYSGTSTVTRRAEPRHSENGTPSSVWRPVAL) lie on the Cytoplasmic side of the membrane. A helical; Signal-anchor for type II membrane protein membrane pass occupies residues 52–72 (TLLTLCLVLLVGLAALGLVFF). The Extracellular portion of the chain corresponds to 73–269 (QFYQLSNIQQ…AGRVVPGELQ (197 aa)). Residues N94, N126, N168, and N202 are each glycosylated (N-linked (GlcNAc...) asparagine). In terms of domain architecture, C-type lectin spans 143–257 (YGDKCYQFYK…CKELRRCACE (115 aa)). Intrachain disulfides connect C164/C256 and C235/C248.

Its subcellular location is the membrane. The sequence is that of C-type lectin domain family 1 member A (Clec1a) from Mus musculus (Mouse).